Consider the following 337-residue polypeptide: Glycerol-3-phosphate dehydrogenase [NAD(P)+] (337 aa).

The NADPH site is built by serine 17, tyrosine 18, histidine 38, and lysine 112. 3 residues coordinate sn-glycerol 3-phosphate: lysine 112, glycine 141, and threonine 143. Alanine 145 provides a ligand contact to NADPH. Sn-glycerol 3-phosphate-binding residues include lysine 197, aspartate 250, serine 260, arginine 261, and asparagine 262. Lysine 197 acts as the Proton acceptor in catalysis. Arginine 261 serves as a coordination point for NADPH. Valine 285 and glutamate 287 together coordinate NADPH.

The protein belongs to the NAD-dependent glycerol-3-phosphate dehydrogenase family.

The protein localises to the cytoplasm. It catalyses the reaction sn-glycerol 3-phosphate + NAD(+) = dihydroxyacetone phosphate + NADH + H(+). The enzyme catalyses sn-glycerol 3-phosphate + NADP(+) = dihydroxyacetone phosphate + NADPH + H(+). It participates in membrane lipid metabolism; glycerophospholipid metabolism. In terms of biological role, catalyzes the reduction of the glycolytic intermediate dihydroxyacetone phosphate (DHAP) to sn-glycerol 3-phosphate (G3P), the key precursor for phospholipid synthesis. The chain is Glycerol-3-phosphate dehydrogenase [NAD(P)+] from Pasteurella multocida (strain Pm70).